Reading from the N-terminus, the 323-residue chain is Pantothenate kinase (323 aa).

An ATP-binding site is contributed by 101 to 108; sequence GSVAVGKS.

This sequence belongs to the prokaryotic pantothenate kinase family.

The protein resides in the cytoplasm. The catalysed reaction is (R)-pantothenate + ATP = (R)-4'-phosphopantothenate + ADP + H(+). It functions in the pathway cofactor biosynthesis; coenzyme A biosynthesis; CoA from (R)-pantothenate: step 1/5. This chain is Pantothenate kinase, found in Paenarthrobacter aurescens (strain TC1).